The following is a 361-amino-acid chain: Zinc transporter ZIP13 (361 aa).

The Lumenal portion of the chain corresponds to 1-6; sequence MPGCPC. Residues 7–27 traverse the membrane as a helical segment; sequence PGCGMAGQRLLFLTVLALELL. At 28–68 the chain is on the cytoplasmic side; that stretch reads ERAGGSQPALRSLGAAAACRLDNKESESWGALLSGERLDTW. A helical transmembrane segment spans residues 69 to 89; that stretch reads ICSLLGSLMVGLSGVFPLLVI. Over 90–108 the chain is Lumenal; that stretch reads PLEMGTLLQSEAGAWRLRQ. Residues 109 to 129 traverse the membrane as a helical segment; sequence LLSFALGGLLGNVFLHLLPEA. The Cytoplasmic segment spans residues 130–150; sequence WAYTCNITPGGEGQSLQRQQQ. A helical membrane pass occupies residues 151-171; the sequence is LGLWVIAGFLTFLALEKMFLN. Residues 172-232 are Lumenal-facing; sequence SKEDPSQAPS…TIDNFTHGLA (61 aa). Residues 233 to 253 traverse the membrane as a helical segment; it reads VAASFLVSKKIGLLTTMAILL. The XEXPHE-motif motif lies at 254–259; that stretch reads HEIPHE. Residues 254–275 are Cytoplasmic-facing; sequence HEIPHEVGDFAILLRAGFDRWT. Residues 276 to 296 traverse the membrane as a helical segment; it reads AAKLQFSTALGGLLGACFAIC. At 297 to 306 the chain is on the lumenal side; that stretch reads TQSPKGVEET. The chain crosses the membrane as a helical span at residues 307–327; sequence VVWILPFTSGGFLYIALVNVL. The Cytoplasmic portion of the chain corresponds to 328-339; it reads PDLLEEDDPWHS. A helical transmembrane segment spans residues 340 to 360; the sequence is LQQVLLLCSGVLVMVLLSLFV. Glutamate 361 is a topological domain (lumenal).

This sequence belongs to the ZIP transporter (TC 2.A.5) family. In terms of assembly, homodimer. As to expression, highly expressed in some tissues such as bone and eye. Expressed in osteoblasts of tibia and of alveolar bone, in proliferative zone of growth plate, and in odontoblasts on the forming of the dentine of crown in molar tooth. Also expressed fibroblasts in reticular layer of dermis of skin.

Its subcellular location is the golgi apparatus membrane. It is found in the cytoplasmic vesicle membrane. The protein resides in the endoplasmic reticulum membrane. The catalysed reaction is Zn(2+)(in) = Zn(2+)(out). Functionally, functions as a zinc transporter transporting Zn(2+) from the Golgi apparatus to the cytosol and thus influences the zinc level at least in areas of the cytosol. May regulate beige adipocyte differentiation. The chain is Zinc transporter ZIP13 from Mus musculus (Mouse).